Here is a 301-residue protein sequence, read N- to C-terminus: 1,5-anhydro-D-fructose reductase (301 aa).

NADP(+) is bound at residue aspartate 35. Residue tyrosine 40 is the Proton donor of the active site. Position 102 (histidine 102) interacts with substrate. NADP(+) is bound by residues glutamine 175 and 246–258 (IPKS…IREN).

Belongs to the aldo/keto reductase family. Monomer.

Its subcellular location is the cytoplasm. The enzyme catalyses 1,5-anhydro-D-glucitol + NADP(+) = 1,5-anhydro-D-fructose + NADPH + H(+). With respect to regulation, inhibited by p-chloromercuribenzoic acid and alkyliodines. Its function is as follows. Catalyzes the NADPH-dependent reduction of 1,5-anhydro-D-fructose (AF) to 1,5-anhydro-D-glucitol. The chain is 1,5-anhydro-D-fructose reductase (Akr1e2) from Mus musculus (Mouse).